A 24-amino-acid polypeptide reads, in one-letter code: Coenzyme PQQ synthesis protein A (24 aa).

The segment at residues 16–20 (EITMY) is a cross-link (pyrroloquinoline quinone (Glu-Tyr)).

This sequence belongs to the PqqA family.

The protein operates within cofactor biosynthesis; pyrroloquinoline quinone biosynthesis. Required for coenzyme pyrroloquinoline quinone (PQQ) biosynthesis. PQQ is probably formed by cross-linking a specific glutamate to a specific tyrosine residue and excising these residues from the peptide. This is Coenzyme PQQ synthesis protein A from Variovorax paradoxus (strain S110).